We begin with the raw amino-acid sequence, 131 residues long: Small ribosomal subunit protein uS8 (131 aa).

The protein belongs to the universal ribosomal protein uS8 family. As to quaternary structure, part of the 30S ribosomal subunit. Contacts proteins S5 and S12.

Functionally, one of the primary rRNA binding proteins, it binds directly to 16S rRNA central domain where it helps coordinate assembly of the platform of the 30S subunit. The protein is Small ribosomal subunit protein uS8 of Nautilia profundicola (strain ATCC BAA-1463 / DSM 18972 / AmH).